The sequence spans 535 residues: MANLDLSKYGITGVTEILHNPSYDVLFAEETKPGLEGFEKGQVTELGAVNVMTGVYTGRSPKDKFFVKNEASENSVWWTSEEYKNDNKPCSEEAWADLKAKAVKELSNKRLFVVDTFCGANEGTRMKVRFIMEVAWQAHFVTNMFIRPTAEELANYGEPDFVCFNASKAKVDNYKELGLNSETATVFNLKTKEQVILNTWYGGEMKKGMFSIMNYMNPLRGIASMHCSANTDMEGTSSAIFFGLSGTGKTTLSTDPKRKLIGDDEHGWDNEGVFNYEGGCYAKVINLDKESEPDIFNAIKRDALLENVTVAADGKINFADKSVTENTRVSYPIYHIENIVKPVSKGPHAKQVIFLSADAFGVLPPVSILNPEQAQYYFLSGFTAKLAGTERGITEPTPTFSACFGAAFLSLHPTKYAEELVKKMEMTGAKAYLVNTGWNGSGKRISIKDTRGIIDAILDGSIDKAPTKVIPFFDFVVPTELPGVDPKILDPRDTYADPAQWNEKAKDLAGRFIKNFAKFTGNEAGKKLVAAGPKL.

Substrate is bound by residues Arg-59, Tyr-201, and Lys-207. Residues Lys-207, His-226, and 243–251 (GLSGTGKTT) contribute to the ATP site. Mn(2+)-binding residues include Lys-207 and His-226. Asp-264 lines the Mn(2+) pocket. Residues Glu-292, Arg-328, 444 to 445 (RI), and Thr-450 each bind ATP. Position 328 (Arg-328) interacts with substrate.

Belongs to the phosphoenolpyruvate carboxykinase (ATP) family. It depends on Mn(2+) as a cofactor.

It localises to the cytoplasm. It catalyses the reaction oxaloacetate + ATP = phosphoenolpyruvate + ADP + CO2. It participates in carbohydrate biosynthesis; gluconeogenesis. In terms of biological role, involved in the gluconeogenesis. Catalyzes the conversion of oxaloacetate (OAA) to phosphoenolpyruvate (PEP) through direct phosphoryl transfer between the nucleoside triphosphate and OAA. In Bacteroides fragilis (strain ATCC 25285 / DSM 2151 / CCUG 4856 / JCM 11019 / LMG 10263 / NCTC 9343 / Onslow / VPI 2553 / EN-2), this protein is Phosphoenolpyruvate carboxykinase (ATP).